A 72-amino-acid chain; its full sequence is UPF0150 protein ssl0738 (72 aa).

This sequence belongs to the UPF0150 family.

The protein is UPF0150 protein ssl0738 of Synechocystis sp. (strain ATCC 27184 / PCC 6803 / Kazusa).